Consider the following 146-residue polypeptide: Hemoglobin subunit beta (146 aa).

The region spanning 2 to 146 (FLTAEEKSLV…VANALAHKYH (145 aa)) is the Globin domain. Ser-44 is modified (phosphoserine). Residue Lys-59 is modified to N6-acetyllysine. His-63 is a heme b binding site. Lys-82 is subject to N6-acetyllysine. Heme b is bound at residue His-92. An S-nitrosocysteine modification is found at Cys-93. Position 144 is an N6-acetyllysine (Lys-144).

The protein belongs to the globin family. Heterotetramer of two alpha chains and two beta chains. In terms of tissue distribution, red blood cells.

Its function is as follows. Involved in oxygen transport from the lung to the various peripheral tissues. The chain is Hemoglobin subunit beta (HBB) from Proteles cristata (Aardwolf).